We begin with the raw amino-acid sequence, 188 residues long: dCTP deaminase (188 aa).

107–112 (KSTYAR) serves as a coordination point for dCTP. The active-site Proton donor/acceptor is the glutamate 133. Glutamine 152, tyrosine 166, and glutamine 176 together coordinate dCTP.

This sequence belongs to the dCTP deaminase family. In terms of assembly, homotrimer.

The enzyme catalyses dCTP + H2O + H(+) = dUTP + NH4(+). It participates in pyrimidine metabolism; dUMP biosynthesis; dUMP from dCTP (dUTP route): step 1/2. Catalyzes the deamination of dCTP to dUTP. This Sulfurovum sp. (strain NBC37-1) protein is dCTP deaminase.